We begin with the raw amino-acid sequence, 438 residues long: Exosome complex component RRP45 (438 aa).

Serine 65 is modified (phosphoserine). An N6-acetyllysine; alternate modification is found at lysine 297. Lysine 297 participates in a covalent cross-link: Glycyl lysine isopeptide (Lys-Gly) (interchain with G-Cter in SUMO1); alternate. A Glycyl lysine isopeptide (Lys-Gly) (interchain with G-Cter in SUMO2); alternate cross-link involves residue lysine 297. 2 positions are modified to phosphoserine: serine 306 and serine 346. 2 disordered regions span residues 337–365 (AQIG…GGID) and 377–438 (TGEV…RTAN). Acidic residues predominate over residues 349 to 364 (DLEDSEKEEEEEEGGI). Phosphoserine is present on residues serine 393 and serine 395. Over residues 427–438 (QGKRKKKKRTAN) the composition is skewed to basic residues.

Belongs to the RNase PH family. As to quaternary structure, component of the RNA exosome core complex (Exo-9), composed of EXOSC1, EXOSC2, EXOSC3, EXOSC4, EXOSC5, EXOSC6, EXOSC7, EXOSC8 and EXOSC9; within the complex interacts with EXOSC3, EXOSC4, EXOSC5 and DIS3. The catalytically inactive RNA exosome core complex (Exo-9) associates with the catalytic subunit EXOSC10/RRP6. Exo-9 may associate with DIS3 to form the nucleolar exosome complex, or DIS3L to form the cytoplasmic exosome complex. Exo-9 is formed by a hexameric base ring consisting of the heterodimers EXOSC4-EXOSC9, EXOSC5-EXOSC8 and EXOSC6-EXOSC7, and a cap ring consisting of EXOSC1, EXOSC2 and EXOSC3. The RNA exosome complex associates with cofactors C1D/RRP47, MPHOSPH6/MPP6 and MTREX/MTR4. Interacts (via C-terminus region) with SETX (via N-terminus domain); the interaction enhances SETX sumoylation. Interacts with DIS3; the interaction is direct.

Its subcellular location is the cytoplasm. It localises to the nucleus. It is found in the nucleolus. The protein localises to the nucleoplasm. Functionally, non-catalytic component of the RNA exosome complex which has 3'-&gt;5' exoribonuclease activity and participates in a multitude of cellular RNA processing and degradation events. In the nucleus, the RNA exosome complex is involved in proper maturation of stable RNA species such as rRNA, snRNA and snoRNA, in the elimination of RNA processing by-products and non-coding 'pervasive' transcripts, such as antisense RNA species and promoter-upstream transcripts (PROMPTs), and of mRNAs with processing defects, thereby limiting or excluding their export to the cytoplasm. The RNA exosome may be involved in Ig class switch recombination (CSR) and/or Ig variable region somatic hypermutation (SHM) by targeting AICDA deamination activity to transcribed dsDNA substrates. In the cytoplasm, the RNA exosome complex is involved in general mRNA turnover and specifically degrades inherently unstable mRNAs containing AU-rich elements (AREs) within their 3' untranslated regions, and in RNA surveillance pathways, preventing translation of aberrant mRNAs. It seems to be involved in degradation of histone mRNA. The catalytic inactive RNA exosome core complex of 9 subunits (Exo-9) is proposed to play a pivotal role in the binding and presentation of RNA for ribonucleolysis, and to serve as a scaffold for the association with catalytic subunits and accessory proteins or complexes. EXOSC9 binds to ARE-containing RNAs. This Mus musculus (Mouse) protein is Exosome complex component RRP45 (Exosc9).